The chain runs to 184 residues: Photosystem I assembly protein Ycf4 (184 aa).

2 consecutive transmembrane segments (helical) span residues 22–42 (FCWA…GTSS) and 57–77 (IIFF…LFIS).

Belongs to the Ycf4 family.

It localises to the plastid. It is found in the chloroplast thylakoid membrane. In terms of biological role, seems to be required for the assembly of the photosystem I complex. In Platanus occidentalis (Sycamore), this protein is Photosystem I assembly protein Ycf4.